A 75-amino-acid polypeptide reads, in one-letter code: UPF0346 protein LEUM_0763 (75 aa).

This sequence belongs to the UPF0346 family.

The sequence is that of UPF0346 protein LEUM_0763 from Leuconostoc mesenteroides subsp. mesenteroides (strain ATCC 8293 / DSM 20343 / BCRC 11652 / CCM 1803 / JCM 6124 / NCDO 523 / NBRC 100496 / NCIMB 8023 / NCTC 12954 / NRRL B-1118 / 37Y).